A 91-amino-acid chain; its full sequence is UPF0386 protein Caul_4643 (91 aa).

It belongs to the UPF0386 family.

The chain is UPF0386 protein Caul_4643 from Caulobacter sp. (strain K31).